A 501-amino-acid polypeptide reads, in one-letter code: Cytochrome P450 90A4 (501 aa).

Residues 2–22 traverse the membrane as a helical segment; the sequence is AAAALLLLAAAAAAVVVAMAL. A heme-binding site is contributed by Cys-446.

This sequence belongs to the cytochrome P450 family. Requires heme as cofactor. As to expression, highly expressed in shoot apex and inflorenscence. Expressed in roots, stems, leaf blades and leaf sheaths.

It localises to the cell membrane. The protein operates within plant hormone biosynthesis; brassinosteroid biosynthesis. Catalyzes the C23-alpha-hydroxylation step in brassinosteroid biosynthesis. Converts 6-deoxocathasterone to 6-deoxoteasterone in the late C6-oxidation pathway and cathasterone to teasterone (TE) in the early C6-oxidation pathway of brassinolide (BL) biosynthesis. In Oryza sativa subsp. japonica (Rice), this protein is Cytochrome P450 90A4.